A 172-amino-acid polypeptide reads, in one-letter code: 3-phenylpropionate/cinnamic acid dioxygenase subunit beta (172 aa).

The protein belongs to the bacterial ring-hydroxylating dioxygenase beta subunit family. This dioxygenase system consists of four proteins: the two subunits of the hydroxylase component (HcaE and HcaF), a ferredoxin (HcaC) and a ferredoxin reductase (HcaD).

It catalyses the reaction 3-phenylpropanoate + NADH + O2 + H(+) = 3-(cis-5,6-dihydroxycyclohexa-1,3-dien-1-yl)propanoate + NAD(+). The enzyme catalyses (E)-cinnamate + NADH + O2 + H(+) = (2E)-3-(cis-5,6-dihydroxycyclohexa-1,3-dien-1-yl)prop-2-enoate + NAD(+). The protein operates within aromatic compound metabolism; 3-phenylpropanoate degradation. In terms of biological role, part of the multicomponent 3-phenylpropionate dioxygenase. Converts 3-phenylpropionic acid (PP) and cinnamic acid (CI) into 3-phenylpropionate-dihydrodiol (PP-dihydrodiol) and cinnamic acid-dihydrodiol (CI-dihydrodiol), respectively. The polypeptide is 3-phenylpropionate/cinnamic acid dioxygenase subunit beta (Escherichia coli O17:K52:H18 (strain UMN026 / ExPEC)).